The primary structure comprises 288 residues: Hydroxyethylthiazole kinase (288 aa).

Methionine 55 serves as a coordination point for substrate. Positions 131 and 177 each coordinate ATP. Substrate is bound at residue glycine 204.

This sequence belongs to the Thz kinase family. Mg(2+) is required as a cofactor.

It catalyses the reaction 5-(2-hydroxyethyl)-4-methylthiazole + ATP = 4-methyl-5-(2-phosphooxyethyl)-thiazole + ADP + H(+). The protein operates within cofactor biosynthesis; thiamine diphosphate biosynthesis; 4-methyl-5-(2-phosphoethyl)-thiazole from 5-(2-hydroxyethyl)-4-methylthiazole: step 1/1. Functionally, catalyzes the phosphorylation of the hydroxyl group of 4-methyl-5-beta-hydroxyethylthiazole (THZ). The chain is Hydroxyethylthiazole kinase from Haloquadratum walsbyi (strain DSM 16790 / HBSQ001).